The sequence spans 308 residues: HTH-type transcriptional activator AllS (308 aa).

An HTH lysR-type domain is found at Phe-2–Thr-59. The segment at residues Phe-19 to Lys-38 is a DNA-binding region (H-T-H motif).

The protein belongs to the LysR transcriptional regulatory family.

Functionally, positive regulator essential for the expression of allD operon. Binds to the allD promoter. This chain is HTH-type transcriptional activator AllS (allS), found in Escherichia coli O6:K15:H31 (strain 536 / UPEC).